The sequence spans 264 residues: Small ribosomal subunit protein uS2 (264 aa).

Residues 222-246 form a disordered region; it reads GRSENKDEQNEQGEQIAPVTNEEKQ.

This sequence belongs to the universal ribosomal protein uS2 family.

The polypeptide is Small ribosomal subunit protein uS2 (Helicobacter hepaticus (strain ATCC 51449 / 3B1)).